The sequence spans 248 residues: 3-deoxy-manno-octulosonate cytidylyltransferase (248 aa).

It belongs to the KdsB family.

Its subcellular location is the cytoplasm. It catalyses the reaction 3-deoxy-alpha-D-manno-oct-2-ulosonate + CTP = CMP-3-deoxy-beta-D-manno-octulosonate + diphosphate. Its pathway is nucleotide-sugar biosynthesis; CMP-3-deoxy-D-manno-octulosonate biosynthesis; CMP-3-deoxy-D-manno-octulosonate from 3-deoxy-D-manno-octulosonate and CTP: step 1/1. It functions in the pathway bacterial outer membrane biogenesis; lipopolysaccharide biosynthesis. Functionally, activates KDO (a required 8-carbon sugar) for incorporation into bacterial lipopolysaccharide in Gram-negative bacteria. The polypeptide is 3-deoxy-manno-octulosonate cytidylyltransferase (Salmonella agona (strain SL483)).